Reading from the N-terminus, the 503-residue chain is Putative cytochrome P450 71A28 (503 aa).

The helical transmembrane segment at 1–21 threads the bilayer; the sequence is MILISLCFTTFLAFLFLNPLL. Residue C443 coordinates heme.

It belongs to the cytochrome P450 family. Heme is required as a cofactor.

It localises to the membrane. This chain is Putative cytochrome P450 71A28 (CYP71A28), found in Arabidopsis thaliana (Mouse-ear cress).